A 427-amino-acid chain; its full sequence is Enolase (427 aa).

Residue glutamine 163 participates in (2R)-2-phosphoglycerate binding. Glutamate 205 acts as the Proton donor in catalysis. Mg(2+) is bound by residues aspartate 242, glutamate 285, and aspartate 312. The (2R)-2-phosphoglycerate site is built by lysine 337, arginine 366, serine 367, and lysine 388. Lysine 337 functions as the Proton acceptor in the catalytic mechanism.

It belongs to the enolase family. Mg(2+) serves as cofactor.

Its subcellular location is the cytoplasm. The protein resides in the secreted. It localises to the cell surface. The catalysed reaction is (2R)-2-phosphoglycerate = phosphoenolpyruvate + H2O. The protein operates within carbohydrate degradation; glycolysis; pyruvate from D-glyceraldehyde 3-phosphate: step 4/5. In terms of biological role, catalyzes the reversible conversion of 2-phosphoglycerate (2-PG) into phosphoenolpyruvate (PEP). It is essential for the degradation of carbohydrates via glycolysis. This is Enolase from Dechloromonas aromatica (strain RCB).